Reading from the N-terminus, the 213-residue chain is Ribosomal RNA small subunit methyltransferase G (213 aa).

Residues Gly-75, Phe-80, 128–129, and Arg-144 contribute to the S-adenosyl-L-methionine site; that span reads IE.

This sequence belongs to the methyltransferase superfamily. RNA methyltransferase RsmG family.

The protein localises to the cytoplasm. It carries out the reaction guanosine(527) in 16S rRNA + S-adenosyl-L-methionine = N(7)-methylguanosine(527) in 16S rRNA + S-adenosyl-L-homocysteine. Its function is as follows. Specifically methylates the N7 position of guanine in position 527 of 16S rRNA. The sequence is that of Ribosomal RNA small subunit methyltransferase G from Brucella ovis (strain ATCC 25840 / 63/290 / NCTC 10512).